The primary structure comprises 355 residues: Guanine nucleotide-binding protein subunit beta-5a (355 aa).

The tract at residues 1-23 (MAAQEEPAQPGDSLATLKSESDT) is disordered. WD repeat units lie at residues 63 to 102 (GHGN…KEHA), 105 to 144 (MPCT…NENL), 153 to 194 (MHTN…QSFH), 195 to 238 (GHAA…QSFE), 239 to 278 (SHDS…EVAI), 280 to 322 (SKES…RVSI), and 325 to 355 (GHEN…RIWA).

It belongs to the WD repeat G protein beta family. In terms of assembly, may interact with RGS9; this interaction stabilizes both proteins and increases RGS9 GTPase-activating protein (GAP) activity, hence accelerating the deactivation of D(2) dopamine receptor-mediated signaling.

It is found in the membrane. Its function is as follows. Enhances GTPase-activating protein (GAP) activity of regulator of G protein signaling (RGS) proteins, such as RGS7 and RGS9, hence involved in the termination of the signaling initiated by the G protein coupled receptors (GPCRs) by accelerating the GTP hydrolysis on the G-alpha subunits, thereby promoting their inactivation. Increases RGS7 GTPase-activating protein (GAP) activity, thereby regulating mood and cognition. Increases RGS9 GTPase-activating protein (GAP) activity, hence contributes to the deactivation of G protein signaling initiated by D(2) dopamine receptors. Along with gnb5b, plays an important role in neuronal signaling, including in the parasympathetic, but not sympathetic, control of heart rate. This is Guanine nucleotide-binding protein subunit beta-5a from Danio rerio (Zebrafish).